The primary structure comprises 732 residues: Serine/threonine-protein kinase CBK1 (732 aa).

Residues 111-240 (SFDNHLNVDP…STEAANSDMT (130 aa)) are disordered. A compositionally biased stretch (polar residues) spans 119 to 159 (DPNNTERFTSMDSMNFQPPASTFTQLGNGSSTNLSEISSGQ). A compositionally biased stretch (low complexity) spans 160–171 (NSLLSNHSVNNL). A compositionally biased stretch (polar residues) spans 172-183 (PTALTSDTSPPV). The span at 185-221 (QHPQFQPQQQQQQQQPQQQQIFQQQQQQQQQQQQPQQ) shows a compositional bias: low complexity. Residues 222–240 (SRAVVNQSVSTEAANSDMT) show a composition bias toward polar residues. Positions 281-310 (HAIERNQRRLELENKIANEDIGSSEERKNR) form a coiled coil. One can recognise a Protein kinase domain in the interval 335–647 (FHTVKVIGKG…AEEIKQHPFF (313 aa)). ATP-binding positions include 341–349 (IGKGAFGEV) and K364. The active-site Proton acceptor is D458. One can recognise an AGC-kinase C-terminal domain in the interval 648–730 (RGVDWDSIRD…SRFDYLTRKN (83 aa)).

Belongs to the protein kinase superfamily. STE Ser/Thr protein kinase family. COT1 subfamily. Interacts with MOB2 and BCR1.

The protein resides in the bud neck. Its subcellular location is the cell tip. The catalysed reaction is L-seryl-[protein] + ATP = O-phospho-L-seryl-[protein] + ADP + H(+). It catalyses the reaction L-threonyl-[protein] + ATP = O-phospho-L-threonyl-[protein] + ADP + H(+). Functionally, serine/threonine-protein kinase required for wild-type hyphal growth and transcriptional regulation of cell-wall-associated genes. Involved in the biofilm formation through phosphorylation of the master regulator of biofilm formation BCR1. This chain is Serine/threonine-protein kinase CBK1 (CBK1), found in Candida albicans (strain SC5314 / ATCC MYA-2876) (Yeast).